A 453-amino-acid chain; its full sequence is MNISPQYLWNQVLERLQIRLTRPAFETWIQDATVQEWKDNCLVIQVANSFILNHLQKTYQPIIAQEVASVVGYPVDIQLTTAEGETMAMTGEAQSYQEKSLTQIAPESPKLNQLNPRYTFSRFVVGPTNRMAHAASLAVAESPGREFNPLFLCGGVGLGKTHLMQAIAHYRLELYPNAKVFYVSTEQFTNDLIAAIRQDSMERFREHYRRADFLLIDDIQFIEGKEYTQEELFHTFNTLHEAGKQVVLASDRAPKRIPTLQDRLISRFSMGLIADIQVPDLETRMAILQKKAQYENMRLPRDVVEYIATNYTSNIRELEGALIRAIAYTSISGLSMTVQNIAPVLNPPVEQVPASPEVILRTVAESLKVSIEDLKGSSRRREISFARQVGMYLMRQHTELSLPRIGEEFGGKDHTTVLYSCDKISKLQQKDWELSQMLSELSDRINMASRTQS.

The tract at residues 1–73 is domain I, interacts with DnaA modulators; the sequence is MNISPQYLWN…AQEVASVVGY (73 aa). Residues 73–112 form a domain II region; it reads YPVDIQLTTAEGETMAMTGEAQSYQEKSLTQIAPESPKLN. A domain III, AAA+ region region spans residues 113 to 329; the sequence is QLNPRYTFSR…GALIRAIAYT (217 aa). Residues glycine 157, glycine 159, lysine 160, and threonine 161 each contribute to the ATP site. The tract at residues 330 to 453 is domain IV, binds dsDNA; the sequence is SISGLSMTVQ…RINMASRTQS (124 aa).

The protein belongs to the DnaA family. As to quaternary structure, oligomerizes as a right-handed, spiral filament on DNA at oriC.

The protein localises to the cytoplasm. In terms of biological role, plays an essential role in the initiation and regulation of chromosomal replication. ATP-DnaA binds to the origin of replication (oriC) to initiate formation of the DNA replication initiation complex once per cell cycle. Binds the DnaA box (a 9 base pair repeat at the origin) and separates the double-stranded (ds)DNA. Forms a right-handed helical filament on oriC DNA; dsDNA binds to the exterior of the filament while single-stranded (ss)DNA is stabiized in the filament's interior. The ATP-DnaA-oriC complex binds and stabilizes one strand of the AT-rich DNA unwinding element (DUE), permitting loading of DNA polymerase. After initiation quickly degrades to an ADP-DnaA complex that is not apt for DNA replication. Binds acidic phospholipids. This is Chromosomal replication initiator protein DnaA from Rippkaea orientalis (strain PCC 8801 / RF-1) (Cyanothece sp. (strain PCC 8801)).